Consider the following 887-residue polypeptide: Fibroblast growth factor receptor 2 (887 aa).

The first 18 residues, 1–18 (MLNKFIVIVTMLAMWNYA), serve as a signal peptide directing secretion. Over 19-416 (QDCNFELSKN…KDCVGNSYFT (398 aa)) the chain is Extracellular. Ig-like C2-type domains follow at residues 22 to 115 (NFEL…EFIS) and 180 to 260 (VSGS…LRMK). N-linked (GlcNAc...) asparagine glycans are attached at residues asparagine 28, asparagine 74, asparagine 93, asparagine 230, asparagine 261, asparagine 268, asparagine 328, asparagine 334, and asparagine 364. An intrachain disulfide couples cysteine 43 to cysteine 104. Positions 297–387 (FNLNSRVCIN…YACRIINFKD (91 aa)) constitute an Ig-like C2-type 3 domain. Cysteine 313 and cysteine 380 form a disulfide bridge. The chain crosses the membrane as a helical span at residues 417 to 437 (IIWYSISVGIIILVVISFLII). The Cytoplasmic portion of the chain corresponds to 438-887 (RLYNKYSNGY…SNQCYSTTIV (450 aa)). In terms of domain architecture, Protein kinase spans 585 to 862 (LIIGSKIGEG…IIDKLTHIQL (278 aa)). Residues 591–599 (IGEGAFGIV) and lysine 619 contribute to the ATP site. Aspartate 728 functions as the Proton acceptor in the catalytic mechanism. At tyrosine 757 the chain carries Phosphotyrosine; by autocatalysis.

It belongs to the protein kinase superfamily. Tyr protein kinase family. Fibroblast growth factor receptor subfamily. Expressed in brain, stem cells and the mesenchymal cells.

Its subcellular location is the membrane. The enzyme catalyses L-tyrosyl-[protein] + ATP = O-phospho-L-tyrosyl-[protein] + ADP + H(+). Its function is as follows. Receptor for basic fibroblast growth factor. This is Fibroblast growth factor receptor 2 (FGFR2) from Dugesia japonica (Planarian).